Consider the following 319-residue polypeptide: Beta-ketoacyl-[acyl-carrier-protein] synthase III (319 aa).

Residues cysteine 113 and histidine 246 contribute to the active site. The segment at 247–251 is ACP-binding; that stretch reads QANIR. Asparagine 276 is an active-site residue.

The protein belongs to the thiolase-like superfamily. FabH family. In terms of assembly, homodimer.

Its subcellular location is the cytoplasm. The enzyme catalyses malonyl-[ACP] + acetyl-CoA + H(+) = 3-oxobutanoyl-[ACP] + CO2 + CoA. Its pathway is lipid metabolism; fatty acid biosynthesis. Its function is as follows. Catalyzes the condensation reaction of fatty acid synthesis by the addition to an acyl acceptor of two carbons from malonyl-ACP. Catalyzes the first condensation reaction which initiates fatty acid synthesis and may therefore play a role in governing the total rate of fatty acid production. Possesses both acetoacetyl-ACP synthase and acetyl transacylase activities. Its substrate specificity determines the biosynthesis of branched-chain and/or straight-chain of fatty acids. This is Beta-ketoacyl-[acyl-carrier-protein] synthase III from Ehrlichia canis (strain Jake).